Here is a 401-residue protein sequence, read N- to C-terminus: Imidazolonepropionase (401 aa).

Fe(3+)-binding residues include H66 and H68. Zn(2+) contacts are provided by H66 and H68. 4-imidazolone-5-propanoate is bound by residues R75, Y138, and H171. N-formimidoyl-L-glutamate is bound at residue Y138. H236 is a Fe(3+) binding site. H236 provides a ligand contact to Zn(2+). Position 239 (Q239) interacts with 4-imidazolone-5-propanoate. D311 contacts Fe(3+). D311 serves as a coordination point for Zn(2+). Residues N313 and G315 each coordinate N-formimidoyl-L-glutamate. T316 contributes to the 4-imidazolone-5-propanoate binding site.

Belongs to the metallo-dependent hydrolases superfamily. HutI family. Zn(2+) is required as a cofactor. Fe(3+) serves as cofactor.

The protein localises to the cytoplasm. It catalyses the reaction 4-imidazolone-5-propanoate + H2O = N-formimidoyl-L-glutamate. It functions in the pathway amino-acid degradation; L-histidine degradation into L-glutamate; N-formimidoyl-L-glutamate from L-histidine: step 3/3. Catalyzes the hydrolytic cleavage of the carbon-nitrogen bond in imidazolone-5-propanoate to yield N-formimidoyl-L-glutamate. It is the third step in the universal histidine degradation pathway. The protein is Imidazolonepropionase of Acinetobacter baumannii (strain ACICU).